The primary structure comprises 135 residues: C-type natriuretic peptide (135 aa).

An N-terminal signal peptide occupies residues 1-25; the sequence is MSGHTSFYCGLLLLLLIQVQARPRA. A propeptide spanning residues 26-113 is cleaved from the precursor; it reads DDSLQVLSRL…PLRFKGRSKK (88 aa). The tract at residues 46 to 67 is disordered; it reads EELNNEAQEISPAASLPDLNTD. A disulfide bridge links Cys119 with Cys135.

It belongs to the natriuretic peptide family.

The protein resides in the secreted. Hormone which may be vasoactive and natriuretic. Has a cGMP-stimulating activity. The chain is C-type natriuretic peptide from Squalus acanthias (Spiny dogfish).